The following is a 457-amino-acid chain: F-box/LRR-repeat protein At3g62440 (457 aa).

The 49-residue stretch at 1-49 (MDRISNLPDEIICHIGSFLSAREAAFTTVLSKRWHNLFTIVPDLHFDSS) folds into the F-box domain. LRR repeat units lie at residues 53–79 (GESL…SLKW), 147–174 (LSLG…SLYH), 177–202 (FYEF…TVCG), 229–254 (WDAF…YYSD), 283–310 (WGKG…NLYT), and 337–362 (LSNF…NIDG).

The protein is F-box/LRR-repeat protein At3g62440 of Arabidopsis thaliana (Mouse-ear cress).